Reading from the N-terminus, the 228-residue chain is Ephrin-A5b (228 aa).

Residues 1 to 20 form the signal peptide; it reads MLQAEMIVFVGVILWMCVFS. The 134-residue stretch at 29 to 162 folds into the Ephrin RBD domain; it reads ADRYAVFWNR…KLKVFVRPPN (134 aa). Asparagine 37 carries N-linked (GlcNAc...) asparagine glycosylation. Disulfide bonds link cysteine 62-cysteine 102 and cysteine 90-cysteine 151. The span at 184–198 shows a compositional bias: basic and acidic residues; it reads LEPRDDTSHEAEPSR. Residues 184-205 form a disordered region; that stretch reads LEPRDDTSHEAEPSRSDVSTSG. Serine 204 is lipidated: GPI-anchor amidated serine. Positions 205 to 228 are cleaved as a propeptide — removed in mature form; it reads GLRHQTSRPLLALLLLCISLYLLL.

The protein belongs to the ephrin family. As to expression, widespread expression in the embryo.

The protein resides in the cell membrane. Cell surface GPI-bound ligand for Eph receptors, a family of receptor tyrosine kinases which are crucial for migration, repulsion and adhesion during neuronal, vascular and epithelial development. Binds promiscuously Eph receptors residing on adjacent cells, leading to contact-dependent bidirectional signaling into neighboring cells. Induces compartmentalized signaling within a caveolae-like membrane microdomain when bound to the extracellular domain of its cognate receptor. This signaling event requires the activity of the Fyn tyrosine kinase. Activates the epha3 receptor to regulate cell-cell adhesion and cytoskeletal organization. With the receptor epha2 may regulate lens fiber cells shape and interactions and be important for lens transparency maintenance. May function actively to stimulate axon fasciculation. Controls axon growth and may be involved in the creation of the retino-tectal map. The polypeptide is Ephrin-A5b (efna5b) (Danio rerio (Zebrafish)).